The primary structure comprises 540 residues: MSKEIKFSSDARSAMVRGVDILADTVKVTLGPKGRNVVLEKSFGSPLITNDGVTIAKEIELEDHFENMGAKLVSEVASKTNDIAGDGTTTATVLTQAIVREGIKNVTAGANPIGIRRGIETAVAAAVEALKNNAIPVANKEAIAQVAAVSSRSEKVGEYISEAMEKVGKDGVITIEESRGMETELEVVEGMQFDRGYLSQYMVTDSEKMVADLENPYILITDKKISNIQEILPLLESILQSNRPLLIIADDVDGEALPTLVLNKIRGTFNVVAVKAPGFGDRRKAMLEDIAILTGGTVITEDLGLELKDATIEALGQAARVTVDKDSTVIVEGAGNPEAISNRVAVIKSQIETTTSEFDREKLQERLAKLSGGVAVIKVGAATETELKEMKLRIEDALNATRAAVEEGIVAGGGTALANVIPAVATLELTGDEATGRNIVLRALEEPVRQIAHNAGFEGSIVIDRLKNAELGIGFNAATGEWVNMIDQGIIDPVKVSRSALQNAASVASLILTTEAVVANKPEPVAPAPAMDPSMMGGMM.

Residues 29–32 (TLGP), 86–90 (DGTTT), G413, 476–478 (NAA), and D492 each bind ATP.

This sequence belongs to the chaperonin (HSP60) family. As to quaternary structure, forms a cylinder of 14 subunits composed of two heptameric rings stacked back-to-back. Interacts with the co-chaperonin GroES.

The protein localises to the cytoplasm. It catalyses the reaction ATP + H2O + a folded polypeptide = ADP + phosphate + an unfolded polypeptide.. Together with its co-chaperonin GroES, plays an essential role in assisting protein folding. The GroEL-GroES system forms a nano-cage that allows encapsulation of the non-native substrate proteins and provides a physical environment optimized to promote and accelerate protein folding. The protein is Chaperonin GroEL of Streptococcus pneumoniae (strain Hungary19A-6).